The primary structure comprises 181 residues: MAADETNLIWVDLEMTGLEPEVDRIIEIATIVTDKELNILAEGPVIAIHQSEDVLAAMDDWNQKHHGESGLIDRVRASDFSEQDAIEQTIAFLSEHVPAGVSPMCGNSIGQDRRFLNRYMPTLEDYFHYRNIDVSSVKELVRRWRPEVMDGFKKQGTHQALVDIQESIAELRYYREKVFKI.

Residues 8–171 (LIWVDLEMTG…VDIQESIAEL (164 aa)) form the Exonuclease domain. Y129 is an active-site residue.

The protein belongs to the oligoribonuclease family.

Its subcellular location is the cytoplasm. In terms of biological role, 3'-to-5' exoribonuclease specific for small oligoribonucleotides. The sequence is that of Oligoribonuclease from Shewanella loihica (strain ATCC BAA-1088 / PV-4).